The following is a 681-amino-acid chain: Threonine--tRNA ligase (681 aa).

Positions 3-97 constitute a TGS domain; that stretch reads KQIQVTLPDG…EEDVQLALLT (95 aa). Residues 279–576 are catalytic; that stretch reads DHRVLGKQLD…LIEHYAGAFP (298 aa). Residues Cys372, His423, and His553 each coordinate Zn(2+).

This sequence belongs to the class-II aminoacyl-tRNA synthetase family. As to quaternary structure, homodimer. It depends on Zn(2+) as a cofactor.

Its subcellular location is the cytoplasm. It carries out the reaction tRNA(Thr) + L-threonine + ATP = L-threonyl-tRNA(Thr) + AMP + diphosphate + H(+). Catalyzes the attachment of threonine to tRNA(Thr) in a two-step reaction: L-threonine is first activated by ATP to form Thr-AMP and then transferred to the acceptor end of tRNA(Thr). Also edits incorrectly charged L-seryl-tRNA(Thr). This Acidobacterium capsulatum (strain ATCC 51196 / DSM 11244 / BCRC 80197 / JCM 7670 / NBRC 15755 / NCIMB 13165 / 161) protein is Threonine--tRNA ligase.